The following is a 147-amino-acid chain: Hemoglobin subunit beta (147 aa).

Position 2 is an N-acetylvaline (Val2). A Globin domain is found at 3-147 (HLTGEEKAAV…VANALAHKYH (145 aa)). Thr13 bears the Phosphothreonine mark. At Ser45 the chain carries Phosphoserine. An N6-acetyllysine modification is found at Lys60. Residue His64 participates in heme b binding. Position 83 is an N6-acetyllysine (Lys83). His93 lines the heme b pocket. At Cys94 the chain carries S-nitrosocysteine. N6-acetyllysine is present on Lys145.

This sequence belongs to the globin family. Heterotetramer of two alpha chains and two beta chains. In terms of tissue distribution, red blood cells.

Functionally, involved in oxygen transport from the lung to the various peripheral tissues. This is Hemoglobin subunit beta (HBB) from Lagothrix lagotricha (Brown woolly monkey).